Reading from the N-terminus, the 323-residue chain is Synaptonemal complex central element protein 1 (323 aa).

The span at 1–10 (MAGRPGSSNA) shows a compositional bias: polar residues. Disordered regions lie at residues 1–31 (MAGR…SSQK) and 294–323 (KQEE…PSTK). Basic and acidic residues-rich tracts occupy residues 20–31 (DEARGQAESSQK) and 313–323 (SEEKDQEPSTK). Residues 25 to 290 (QAESSQKIED…EKLGVQVLAQ (266 aa)) are a coiled coil.

This sequence belongs to the SYCE family. In terms of assembly, homodimer. Found in a complex with SYCP1 and SYCE2. Interacts with SYCP1, SYCE2 and SYCE3. Interacts with SIX6OS1.

The protein localises to the nucleus. Its subcellular location is the chromosome. Its function is as follows. Major component of the transverse central element of synaptonemal complexes (SCS), formed between homologous chromosomes during meiotic prophase. Requires SYCP1 in order to be incorporated into the central element. May have a role in the synaptonemal complex assembly, stabilization and recombination. This is Synaptonemal complex central element protein 1 (SYCE1) from Bos taurus (Bovine).